A 421-amino-acid chain; its full sequence is ATP-dependent RNA helicase RhlB (421 aa).

Positions 9–37 (THFADLPINEQVVKALSAANFSHCTPIQA) match the Q motif motif. The region spanning 40-216 (LPPLLEGNDI…YEHMDNPTHV (177 aa)) is the Helicase ATP-binding domain. 53-60 (AQTGTGKT) contacts ATP. The short motif at 162–165 (DEAD) is the DEAD box element. The Helicase C-terminal domain maps to 240–387 (KMALLLSLME…VTEYQADALL (148 aa)). The segment at 389–421 (DVTPPKPRHKKRMQNGRNPQKRQSSGSRNRRKP) is disordered. Residues 403-415 (NGRNPQKRQSSGS) are compositionally biased toward polar residues.

It belongs to the DEAD box helicase family. RhlB subfamily. As to quaternary structure, component of the RNA degradosome, which is a multiprotein complex involved in RNA processing and mRNA degradation.

It is found in the cytoplasm. The enzyme catalyses ATP + H2O = ADP + phosphate + H(+). DEAD-box RNA helicase involved in RNA degradation. Has RNA-dependent ATPase activity and unwinds double-stranded RNA. The protein is ATP-dependent RNA helicase RhlB of Pseudoalteromonas atlantica (strain T6c / ATCC BAA-1087).